The following is a 421-amino-acid chain: uncharacterized protein (421 aa).

This is an uncharacterized protein from Escherichia coli (strain K12).